The sequence spans 386 residues: MTAGSDLDDFRGLLAKAFDERVVAWTAEAEAQERFPRQLIEHLGVCGVFDAKWATDARPDVGKLVELAFALGQLASAGIGVGVSLHDSAIAILRRFGKSDYLRDICDQAIRGAAVLCIGASEESGGSDLQIVETEIRSRDGGFEVRGVKKFVSLSPIADHIMVVARSVDHDPTSRHGNVAVVAVPAAQVSVQTPYRKVGAGPLDTAAVCIDTWVPADALVARAGTGLAAISWGLAHERMSIAGQIAASCQRAIGITLARMMSRRQFGQTLFEHQALRLRMADLQARVDLLRYALHGIAEQGRLELRTAAAVKVTAARLGEEVISECMHIFGGAGYLVDETTLGKWWRDMKLARVGGGTDEVLWELVAAGMTPDHDGYAAVVGASKA.

Belongs to the acyl-CoA dehydrogenase family. FAD is required as a cofactor.

It functions in the pathway siderophore biosynthesis; mycobactin biosynthesis. Its function is as follows. Catalyzes the dehydrogenation at the alpha-beta position of ACP-bound acyl chains. This results in the introduction of a double bond in the lipidic chain, which is further transferred to the epsilon-amino group of lysine residue in the mycobactin core by MbtK. This chain is Acyl-[acyl-carrier-protein] dehydrogenase MbtN (mbtN), found in Mycobacterium bovis (strain ATCC BAA-935 / AF2122/97).